We begin with the raw amino-acid sequence, 76 residues long: Exodeoxyribonuclease 7 small subunit (76 aa).

The protein belongs to the XseB family. Heterooligomer composed of large and small subunits.

Its subcellular location is the cytoplasm. It catalyses the reaction Exonucleolytic cleavage in either 5'- to 3'- or 3'- to 5'-direction to yield nucleoside 5'-phosphates.. Its function is as follows. Bidirectionally degrades single-stranded DNA into large acid-insoluble oligonucleotides, which are then degraded further into small acid-soluble oligonucleotides. This is Exodeoxyribonuclease 7 small subunit from Geobacillus thermodenitrificans (strain NG80-2).